We begin with the raw amino-acid sequence, 354 residues long: Ferrochelatase (354 aa).

Fe cation is bound by residues His-214 and Glu-295.

This sequence belongs to the ferrochelatase family.

It is found in the cytoplasm. It catalyses the reaction heme b + 2 H(+) = protoporphyrin IX + Fe(2+). Its pathway is porphyrin-containing compound metabolism; protoheme biosynthesis; protoheme from protoporphyrin-IX: step 1/1. Functionally, catalyzes the ferrous insertion into protoporphyrin IX. This is Ferrochelatase from Burkholderia orbicola (strain AU 1054).